A 152-amino-acid chain; its full sequence is Ubiquitin-conjugating enzyme E2 N (152 aa).

One can recognise a UBC core domain in the interval 3–149 (GLPRRIIKET…ARAWTRLYAM (147 aa)). Lysine 82 is modified (N6-acetyllysine). Cysteine 87 acts as the Glycyl thioester intermediate in catalysis. A Glycyl lysine isopeptide (Lys-Gly) (interchain with G-Cter in ISG15) cross-link involves residue lysine 92.

The protein belongs to the ubiquitin-conjugating enzyme family. In terms of assembly, heterodimer with UBE2V2. Interacts (UBE2V2-UBE2N heterodimer) with the E3 ligase STUB1 (via the U-box domain); the complex has a specific 'Lys-63'-linked polyubiquitination activity. Interacts with RNF8 and RNF168. Interacts with RNF11. Interacts with the E3 ligases, HLTF and SHPRH; the interactions promote the 'Lys-63'-linked polyubiquitination of PCNA upon genotoxic stress and lead to DNA repair. Interacts with ARIH2 (via RING-type 2). Interacts with OTUB1; leading to inhibit E2-conjugating activity. Interacts with GPS2; leading to inhibit E2-conjugating activity. Interacts with RIGI and RNF135; involved in RIGI ubiquitination and activation. In terms of processing, conjugation to ISG15 impairs formation of the thioester bond with ubiquitin but not interaction with UBE2V2.

The catalysed reaction is S-ubiquitinyl-[E1 ubiquitin-activating enzyme]-L-cysteine + [E2 ubiquitin-conjugating enzyme]-L-cysteine = [E1 ubiquitin-activating enzyme]-L-cysteine + S-ubiquitinyl-[E2 ubiquitin-conjugating enzyme]-L-cysteine.. It participates in protein modification; protein ubiquitination. Its activity is regulated as follows. Activity is inhibited by binding to OTUB1, which prevents 'Lys-63'-linked polyubiquitination. Activity is inhibited by GPS2, leading to prevent 'Lys-63'-linked polyubiquitination. Its function is as follows. The UBE2V1-UBE2N and UBE2V2-UBE2N heterodimers catalyze the synthesis of non-canonical 'Lys-63'-linked polyubiquitin chains. This type of polyubiquitination does not lead to protein degradation by the proteasome. Mediates transcriptional activation of target genes. Plays a role in the control of progress through the cell cycle and differentiation. Plays a role in the error-free DNA repair pathway and contributes to the survival of cells after DNA damage. Acts together with the E3 ligases, HLTF and SHPRH, in the 'Lys-63'-linked poly-ubiquitination of PCNA upon genotoxic stress, which is required for DNA repair. Appears to act together with E3 ligase RNF5 in the 'Lys-63'-linked polyubiquitination of JKAMP thereby regulating JKAMP function by decreasing its association with components of the proteasome and ERAD. Promotes TRIM5 capsid-specific restriction activity and the UBE2V1-UBE2N heterodimer acts in concert with TRIM5 to generate 'Lys-63'-linked polyubiquitin chains which activate the MAP3K7/TAK1 complex which in turn results in the induction and expression of NF-kappa-B and MAPK-responsive inflammatory genes. Together with RNF135 and UB2V1, catalyzes the viral RNA-dependent 'Lys-63'-linked polyubiquitination of RIGI to activate the downstream signaling pathway that leads to interferon beta production. UBE2V1-UBE2N together with TRAF3IP2 E3 ubiquitin ligase mediate 'Lys-63'-linked polyubiquitination of TRAF6, a component of IL17A-mediated signaling pathway. The sequence is that of Ubiquitin-conjugating enzyme E2 N (UBE2N) from Bos taurus (Bovine).